The chain runs to 515 residues: MDEFHRCGKEDSFWQQCFLYPLFFQEDLYAISHDHYLDVSSSSRPMEHLSSNDQLSFLTVKRLIGQIRQQNHSIVLFVNCDPNPLADRKKSFYSESVLEALTLVLEVPFSIWSKYSVEGMNECKSFRSIHSIFPFLEDKFPHSNSILDARIPYSIHPEILVRTFRRWIRDAPSLHPLRSVLYDYRNSPENLQRSIIVVPRVNTRFFLFLLNYYVCECESILFSRLKRSSHSRSLSHGSFPQRTHFHRKIKHIIIFSRRNSLKSIWSLKDPKIHYVRYGERPIIAIKGAHLLVKKCRYYLLIFRQFYFHLWSEPYRVCSHQLSKNCSSSPGYFLRVRMNPIFVRTKMLDELFIADLITNEMDPIVPIVPIIGLLATEKFCDISGRPISKLSWTSLTDDDILDRFDQIWRNLFHYYSGSFDRDGLYRIKYILSLSCAKTLACKHKSTIRVVRKELGPELFKKSFSKEREFDSLPFSSKAAARSQRERIWHSDIPQINPLANSWQKIQDLKIENLFDQ.

It belongs to the intron maturase 2 family. MatK subfamily.

The protein resides in the plastid. It is found in the chloroplast. Its function is as follows. Usually encoded in the trnK tRNA gene intron. Probably assists in splicing its own and other chloroplast group II introns. The sequence is that of Maturase K from Pinus roxburghii (Chir pine).